We begin with the raw amino-acid sequence, 225 residues long: 2-C-methyl-D-erythritol 4-phosphate cytidylyltransferase (225 aa).

The protein belongs to the IspD/TarI cytidylyltransferase family. IspD subfamily.

It carries out the reaction 2-C-methyl-D-erythritol 4-phosphate + CTP + H(+) = 4-CDP-2-C-methyl-D-erythritol + diphosphate. It functions in the pathway isoprenoid biosynthesis; isopentenyl diphosphate biosynthesis via DXP pathway; isopentenyl diphosphate from 1-deoxy-D-xylulose 5-phosphate: step 2/6. In terms of biological role, catalyzes the formation of 4-diphosphocytidyl-2-C-methyl-D-erythritol from CTP and 2-C-methyl-D-erythritol 4-phosphate (MEP). This Cereibacter sphaeroides (strain ATCC 17029 / ATH 2.4.9) (Rhodobacter sphaeroides) protein is 2-C-methyl-D-erythritol 4-phosphate cytidylyltransferase.